The primary structure comprises 247 residues: Protein GrpE (247 aa).

Disordered stretches follow at residues 1–64 (MNDE…QALD) and 214–247 (SMGPGPKDDGEETITEQSLEGDNTTDQQSSEKSD). 3 stretches are compositionally biased toward polar residues: residues 30–39 (DEPSLSNVAE), 49–63 (DVTSSDAKDSSSQAL), and 228–241 (TEQSLEGDNTTDQQ).

It belongs to the GrpE family. In terms of assembly, homodimer.

It is found in the cytoplasm. Its function is as follows. Participates actively in the response to hyperosmotic and heat shock by preventing the aggregation of stress-denatured proteins, in association with DnaK and GrpE. It is the nucleotide exchange factor for DnaK and may function as a thermosensor. Unfolded proteins bind initially to DnaJ; upon interaction with the DnaJ-bound protein, DnaK hydrolyzes its bound ATP, resulting in the formation of a stable complex. GrpE releases ADP from DnaK; ATP binding to DnaK triggers the release of the substrate protein, thus completing the reaction cycle. Several rounds of ATP-dependent interactions between DnaJ, DnaK and GrpE are required for fully efficient folding. The protein is Protein GrpE of Prochlorococcus marinus (strain MIT 9211).